The following is a 139-amino-acid chain: Large ribosomal subunit protein uL16 (139 aa).

A compositionally biased stretch (basic residues) spans 1 to 16; the sequence is MLIPRRVKHRKQHHPG. A disordered region spans residues 1–25; the sequence is MLIPRRVKHRKQHHPGRSGQATGGT.

This sequence belongs to the universal ribosomal protein uL16 family. As to quaternary structure, part of the 50S ribosomal subunit.

Its function is as follows. Binds 23S rRNA and is also seen to make contacts with the A and possibly P site tRNAs. This chain is Large ribosomal subunit protein uL16, found in Leifsonia xyli subsp. xyli (strain CTCB07).